The chain runs to 444 residues: Ribosomal protein uS12 methylthiotransferase RimO (444 aa).

One can recognise an MTTase N-terminal domain in the interval 6 to 116; sequence PNIGFVSLGC…VMEHVHKYVP (111 aa). Positions 15, 51, 80, 148, 152, and 155 each coordinate [4Fe-4S] cluster. Residues 134 to 375 form the Radical SAM core domain; the sequence is LTPKHYAYLK…MQLQQEISAA (242 aa). Positions 378-444 constitute a TRAM domain; sequence QQKIGKTWKV…ADEYDLWGTC (67 aa).

This sequence belongs to the methylthiotransferase family. RimO subfamily. [4Fe-4S] cluster serves as cofactor.

The protein localises to the cytoplasm. It carries out the reaction L-aspartate(89)-[ribosomal protein uS12]-hydrogen + (sulfur carrier)-SH + AH2 + 2 S-adenosyl-L-methionine = 3-methylsulfanyl-L-aspartate(89)-[ribosomal protein uS12]-hydrogen + (sulfur carrier)-H + 5'-deoxyadenosine + L-methionine + A + S-adenosyl-L-homocysteine + 2 H(+). In terms of biological role, catalyzes the methylthiolation of an aspartic acid residue of ribosomal protein uS12. This chain is Ribosomal protein uS12 methylthiotransferase RimO, found in Actinobacillus succinogenes (strain ATCC 55618 / DSM 22257 / CCUG 43843 / 130Z).